A 139-amino-acid chain; its full sequence is Cuticle protein 76 (139 aa).

6 consecutive repeat copies span residues 7–10, 68–71, 75–78, 93–95, 105–108, and 121–124.

In terms of biological role, component of the cuticle of migratory locust which contains more than 100 different structural proteins. This is Cuticle protein 76 from Locusta migratoria (Migratory locust).